The primary structure comprises 244 residues: tRNA (guanine-N(1)-)-methyltransferase (244 aa).

S-adenosyl-L-methionine-binding positions include Gly-112 and Ile-131 to Val-136.

It belongs to the RNA methyltransferase TrmD family. As to quaternary structure, homodimer.

Its subcellular location is the cytoplasm. It carries out the reaction guanosine(37) in tRNA + S-adenosyl-L-methionine = N(1)-methylguanosine(37) in tRNA + S-adenosyl-L-homocysteine + H(+). In terms of biological role, specifically methylates guanosine-37 in various tRNAs. The polypeptide is tRNA (guanine-N(1)-)-methyltransferase (Clostridium kluyveri (strain NBRC 12016)).